The chain runs to 292 residues: Homoserine kinase (292 aa).

Residue 80–90 coordinates ATP; the sequence is PLARGLGSSSS.

The protein belongs to the GHMP kinase family. Homoserine kinase subfamily.

The protein resides in the cytoplasm. The catalysed reaction is L-homoserine + ATP = O-phospho-L-homoserine + ADP + H(+). Its pathway is amino-acid biosynthesis; L-threonine biosynthesis; L-threonine from L-aspartate: step 4/5. Catalyzes the ATP-dependent phosphorylation of L-homoserine to L-homoserine phosphate. The chain is Homoserine kinase from Leuconostoc mesenteroides subsp. mesenteroides (strain ATCC 8293 / DSM 20343 / BCRC 11652 / CCM 1803 / JCM 6124 / NCDO 523 / NBRC 100496 / NCIMB 8023 / NCTC 12954 / NRRL B-1118 / 37Y).